A 627-amino-acid chain; its full sequence is MTQALQVPSAPARCRHLRRKNGVLLRIVEKTDRTRYAHALRHGCRHRMCEGVHGTEEDAMGSESAEMDSPHATARPQEQGEDRAWDACGVWVKVPPEAQEPPVSSGGPEDPEAPAQHAPPGARVDAVRHHVYRALPVQSSAEDSRGFVDLSVEDEVLARGCSHAPGGESSSDQAADAPAGDAAYSEVPSFDDLVTRTAQSQDDRVDLSAAMSSVVTEEPPEPRGCSMPCPSGSCDTTEFDDLLSSLSHDAPEYPVDSDPITYSASEPSSEGPVRGAPFSDVDAVAQSLMGDAQVAAQGAQASTSGDASTDLLLKIAQEISSIRADLDQLKGTFSRQAGAEPAQAPATAPAPEGTEAAYSGFFCDDDPDETIALTNDELNNILITSEFTEEDGKDSAADAFGGELSGFESSHIGSAAGDFSYLEEDDHAAARVAQEQWVQQGRATLGNEVFDVKEQGAHADRDAAADPSPVAKDDASPEAQRAHVSSTGLDAAGAEQPLNTENVFDDEDTQREDTSFPLPEEQELDVSVPSLEFSAPHAIETAASESSEVATPVAIESPPQSEAARPAQGDSANLAPPLSKSLADEVRSVLGYMDRLLESLPEEKIEEFARSEYFHTYKHLFDELGIS.

Disordered regions lie at residues 57–82 (EDAM…QGED), 96–121 (PEAQ…APPG), 160–184 (GCSH…DAAY), 198–232 (AQSQ…CPSG), 247–277 (SHDA…RGAP), 335–358 (RQAG…EAAY), and 449–579 (VFDV…PPLS). Residues 169–183 (SSSDQAADAPAGDAA) show a composition bias toward low complexity. The segment covering 336–357 (QAGAEPAQAPATAPAPEGTEAA) has biased composition (low complexity). Residues 450 to 464 (FDVKEQGAHADRDAA) are compositionally biased toward basic and acidic residues.

This is an uncharacterized protein from Treponema pallidum (strain Nichols).